Consider the following 1263-residue polypeptide: MKEISCGRRTRVSFGKSREPLPIPDLVEIQKSSYRRFLEEGLLEVLKKFSPIYSQATRSDLRKSDRGFALEFVSTRTGEPAIDPLECKAKGLTYSVPIYATARLTDMKSGEMKEEEVFLGYIPYMTDRGTFIINGAERVVVNQIVVSPGLYFSSEYIDREEYGGYFLPSRGAWLEVILDPYDGVLYAGLDGKKVNLFLFLKTIGYEKDEDILSLYPTYLDADDEDSLLLHVGSILLEDIYDGGRKIAEKWDILTKDLAERILMIDDINQIKIVHPIAQNTFEKMLEVVSSSSEEGEEEEEKTKIYGLNEVTVVDAYLEIFRRLRPEELPRINAAKRYLHDLFFNPERYDLSEVGRYKVNERLRNAYIRYLIEVEGEDPEEARKKVYNETSLVLKPLDIVLASRILFDYFERRYVNDFEIDSYELKNLIRIFKEEYLEKRKTAPYDLRKLVSVFRRNYGVTSDLGVFAAIRYVSNINKELPSIPFDTKDHLGNKRVRTVGELVQREFERLFARAQKAIQERLTLINSLSKVSIQSLINIKSIISTVNQFFAMNQLSQFMDQVNPLSELTHKRRVSAVGPGGLRRESKVFEARNVHYSQYGRLCPIETPEGANIGFITSLAIYAKIDEYGFLMTPYRKVVNGKVTDEVVYLRANEEEEYKIIPATTPVDEEGNIIPERVVARMGEDIRLVPKEEVDFMDVSTKQPFSVSASLIPFLEHDDASRALMGSNMQRQAVPLLKTEAPLVGTGMEWEAAKNSGYVILAEHDGIVKEVDAARVVVHRTDENGNLMYDDKGNPVVDEYRLLKFVRSNQDTMINQKPIVNEGDFVKKGDPIADGPATDMGELALGRNILVAFMPWEGYNYEDAILVSQELLEEDVFTSIHIEVYETQARETRLGPEEITADIPNVSKELLKNLDENGIIRVGAYVVSDYGVGSQAILVGKVTPKGEGDTTPEEKIIRSVFGERGRDVKDTSLRLPHGVEGRVIRVDVYDQNDIAELGAGVLKLVRVYVASRKTLDIGDKLAGRHGNKGVVSNILPKEDMPFLPDGTPVQMVLNPLGIPSRMNVGQILETHLGWLAKLTGKWFATPVFEGAKEDEILRPLYEERKKRGLHLGDDENNPNGKVVLRDGRTGEPFDNPVVVGYMYMLKLIHIAKEKIHARSTGPYSLIHQQPLGGKSHFGGQRLGEMEVWALEAYGAAHTLAEMLTIKSDDIKGRNEAYKAILKNMNIPEPGVPESFRVLIKELRGLALDVRLYDENGNEIDIDKY.

The protein belongs to the RNA polymerase beta chain family. As to quaternary structure, the RNAP catalytic core consists of 2 alpha, 1 beta, 1 beta' and 1 omega subunit. When a sigma factor is associated with the core the holoenzyme is formed, which can initiate transcription.

The catalysed reaction is RNA(n) + a ribonucleoside 5'-triphosphate = RNA(n+1) + diphosphate. DNA-dependent RNA polymerase catalyzes the transcription of DNA into RNA using the four ribonucleoside triphosphates as substrates. The chain is DNA-directed RNA polymerase subunit beta from Thermotoga maritima (strain ATCC 43589 / DSM 3109 / JCM 10099 / NBRC 100826 / MSB8).